Here is a 109-residue protein sequence, read N- to C-terminus: RYamide neuropeptides (109 aa).

The first 22 residues, 1-22 (MNECVNKLLHLKFLFYFILGIQ), serve as a signal peptide directing secretion. Position 33 is a tyrosine amide (tyrosine 33). Residues 36 to 53 (STTYDESLKSRRIFIVPR) constitute a propeptide that is removed on maturation. A Tyrosine amide modification is found at tyrosine 63. A propeptide spanning residues 67–109 (SGKYLCLSREINKLIVRKRLRNNDKERTPTLSFITKHFLMRNT) is cleaved from the precursor.

It is found in the secreted. Neuropeptides RYamide-1 and RYamide-2 are ligands for the G-protein coupled receptor RYa-R. May suppress feeding behavior. This Drosophila melanogaster (Fruit fly) protein is RYamide neuropeptides.